A 256-amino-acid polypeptide reads, in one-letter code: ATP synthase subunit a (256 aa).

Transmembrane regions (helical) follow at residues 33–53, 92–112, 122–142, 148–168, 191–211, and 235–255; these read ITTF…LTLL, YFPL…IGMI, MVFI…IGLY, FFAL…LVLI, GHLL…VSIV, and MIQS…GLYL.

It belongs to the ATPase A chain family. In terms of assembly, F-type ATPases have 2 components, CF(1) - the catalytic core - and CF(0) - the membrane proton channel. CF(1) has five subunits: alpha(3), beta(3), gamma(1), delta(1), epsilon(1). CF(0) has three main subunits: a, b and c.

The protein resides in the mitochondrion inner membrane. In terms of biological role, mitochondrial membrane ATP synthase (F(1)F(0) ATP synthase or Complex V) produces ATP from ADP in the presence of a proton gradient across the membrane which is generated by electron transport complexes of the respiratory chain. F-type ATPases consist of two structural domains, F(1) - containing the extramembraneous catalytic core and F(0) - containing the membrane proton channel, linked together by a central stalk and a peripheral stalk. During catalysis, ATP synthesis in the catalytic domain of F(1) is coupled via a rotary mechanism of the central stalk subunits to proton translocation. Key component of the proton channel; it may play a direct role in the translocation of protons across the membrane. The chain is ATP synthase subunit a (ATP6) from Wickerhamomyces canadensis (Yeast).